Here is a 133-residue protein sequence, read N- to C-terminus: Small ribosomal subunit protein uS8 (133 aa).

This sequence belongs to the universal ribosomal protein uS8 family. As to quaternary structure, part of the 30S ribosomal subunit.

Its function is as follows. One of the primary rRNA binding proteins, it binds directly to 16S rRNA central domain where it helps coordinate assembly of the platform of the 30S subunit. The protein is Small ribosomal subunit protein uS8 of Hyperthermus butylicus (strain DSM 5456 / JCM 9403 / PLM1-5).